A 76-amino-acid polypeptide reads, in one-letter code: Secreted RxLR effector protein 31 (76 aa).

The signal sequence occupies residues 1–24; it reads MRHCACLFHLFLIGFLCNVYFSAC. The RxLR-dEER signature appears at 49-64; that stretch reads RILRANDSEFLLTEER. Asn54 carries an N-linked (GlcNAc...) asparagine glycan.

Belongs to the RxLR effector family.

Its subcellular location is the secreted. The protein resides in the host nucleus. It is found in the host cytoplasm. Functionally, secreted effector that dos not suppress the host cell death induced by cell death-inducing proteins. The chain is Secreted RxLR effector protein 31 from Plasmopara viticola (Downy mildew of grapevine).